We begin with the raw amino-acid sequence, 320 residues long: Ferrochelatase (320 aa).

Fe cation contacts are provided by H194 and E275.

The protein belongs to the ferrochelatase family. In terms of assembly, monomer.

The protein localises to the cytoplasm. It carries out the reaction heme b + 2 H(+) = protoporphyrin IX + Fe(2+). Its pathway is porphyrin-containing compound metabolism; protoheme biosynthesis; protoheme from protoporphyrin-IX: step 1/1. Catalyzes the ferrous insertion into protoporphyrin IX. This chain is Ferrochelatase, found in Escherichia coli O8 (strain IAI1).